A 131-amino-acid polypeptide reads, in one-letter code: DNA-directed RNA polymerase subunit omega (131 aa).

Belongs to the RNA polymerase subunit omega family. As to quaternary structure, the RNAP catalytic core consists of 2 alpha, 1 beta, 1 beta' and 1 omega subunit. When a sigma factor is associated with the core the holoenzyme is formed, which can initiate transcription.

It catalyses the reaction RNA(n) + a ribonucleoside 5'-triphosphate = RNA(n+1) + diphosphate. Functionally, promotes RNA polymerase assembly. Latches the N- and C-terminal regions of the beta' subunit thereby facilitating its interaction with the beta and alpha subunits. In Chelativorans sp. (strain BNC1), this protein is DNA-directed RNA polymerase subunit omega.